The chain runs to 640 residues: Threonine--tRNA ligase (640 aa).

The 61-residue stretch at Met-1 to Thr-61 folds into the TGS domain. The tract at residues Asp-242–Pro-533 is catalytic. Zn(2+) is bound by residues Cys-333, His-384, and His-510.

Belongs to the class-II aminoacyl-tRNA synthetase family. Homodimer. Zn(2+) serves as cofactor.

Its subcellular location is the cytoplasm. It catalyses the reaction tRNA(Thr) + L-threonine + ATP = L-threonyl-tRNA(Thr) + AMP + diphosphate + H(+). Catalyzes the attachment of threonine to tRNA(Thr) in a two-step reaction: L-threonine is first activated by ATP to form Thr-AMP and then transferred to the acceptor end of tRNA(Thr). Also edits incorrectly charged L-seryl-tRNA(Thr). In Halorhodospira halophila (strain DSM 244 / SL1) (Ectothiorhodospira halophila (strain DSM 244 / SL1)), this protein is Threonine--tRNA ligase.